A 429-amino-acid polypeptide reads, in one-letter code: MKKFDKSIAAFEEAQDLMPGGVNSPVRAFKSVGMNPLFMERGKGSKVYDIDGNEYIDYVLSWGPLIHGHANNRVVEALKAVAEKGTSFGAPTEIENKLAKLVIERVPSIEIVRMVNSGTEATMSALRLARGYTGRNKILKFIGCYHGHGDSLLIKAGSGVATLGLPDSPGVPEGVAKNTITVAYNDLESVKYAFEQFGDDIACVIVEPVAGNMGVVPPQPGFLEGLREVTEQNGALLIFDEVMTGFRVAYNCGQGYYGVTPDLTCLGKVIGGGLPVGAYGGKAEIMRQVAPSGPIYQAGTLSGNPLAMAAGYETLVQLTPESYVEFERKAEMLEAGLRKAAEKHGIPHHINRAGSMIGIFFTDEPVINYDAAKSSNLEFFAAYYREMVEQGVFLPPSQFEGLFLSTAHSDADIEATIAAAEIAMSKLKA.

An N6-(pyridoxal phosphate)lysine modification is found at Lys-268.

It belongs to the class-III pyridoxal-phosphate-dependent aminotransferase family. HemL subfamily. In terms of assembly, homodimer. Pyridoxal 5'-phosphate serves as cofactor.

Its subcellular location is the cytoplasm. The enzyme catalyses (S)-4-amino-5-oxopentanoate = 5-aminolevulinate. It participates in porphyrin-containing compound metabolism; protoporphyrin-IX biosynthesis; 5-aminolevulinate from L-glutamyl-tRNA(Glu): step 2/2. This is Glutamate-1-semialdehyde 2,1-aminomutase 2 from Bacillus cereus (strain ATCC 10987 / NRS 248).